The sequence spans 244 residues: MAGTSSEAEAEALAAARERSRLFLSGLELVQQGAEARVFRGRFQGRAAVVKHRFPKSYRHPELEARLGRRRTVQEARALLRCRRAGIAAPVVFFVDYASNCLYMEEIEDSVTVRDYIQSTMETEKDPQCLLDLARRMGQVLAGMHDQDLIHGDLTTSNMLLRRPLAQLHIVLIDFGLSFVSGLPEDKGVDLYVLEKAFLSTHPHTETAFEAFLKSYGASSKKSSPVLKKLDEVRLRGRKRSMVG.

The Protein kinase domain occupies 24–244 (LSGLELVQQG…LRGRKRSMVG (221 aa)). Phosphoserine is present on Ser-25. Residues 30-38 (VQQGAEARV) and Lys-51 contribute to the ATP site. Residues 69–86 (RRRTVQEARALLRCRRAG) carry the Nuclear localization signal motif. Asp-153 acts as the Proton acceptor in catalysis.

The protein belongs to the protein kinase superfamily. BUD32 family. Component of the EKC/KEOPS complex composed of at least GON7, TP53RK, TPRKB, OSGEP and LAGE3; the whole complex dimerizes.

It localises to the nucleus. It catalyses the reaction L-seryl-[protein] + ATP = O-phospho-L-seryl-[protein] + ADP + H(+). The enzyme catalyses L-threonyl-[protein] + ATP = O-phospho-L-threonyl-[protein] + ADP + H(+). Functionally, component of the EKC/KEOPS complex that is required for the formation of a threonylcarbamoyl group on adenosine at position 37 (t(6)A37) in tRNAs that read codons beginning with adenine. The complex is probably involved in the transfer of the threonylcarbamoyl moiety of threonylcarbamoyl-AMP (TC-AMP) to the N6 group of A37. TP53RK has ATPase activity in the context of the EKC/KEOPS complex and likely plays a supporting role to the catalytic subunit OSGEP. Atypical protein kinase that phosphorylates 'Ser-15' of p53/TP53 protein and may therefore participate in its activation. This Mus musculus (Mouse) protein is EKC/KEOPS complex subunit Tp53rkb.